The following is a 125-amino-acid chain: SOSS complex subunit C homolog A (125 aa).

Positions 1–16 are enriched in polar residues; sequence MAFPNTSAQQAETNSK. 3 disordered regions span residues 1–20, 38–74, and 105–125; these read MAFPNTSAQQAETNSKSLEE, SNTNQMPAPQLLGQPSTTTATPDLVSTNSTPPRAAFN, and PATPSTTTPPITPIANANNPK.

It belongs to the SOSS-C family.

This is SOSS complex subunit C homolog A from Drosophila willistoni (Fruit fly).